The primary structure comprises 193 residues: UPF0314 protein Pden_1914 (193 aa).

The next 4 helical transmembrane spans lie at 13–33 (APYWATFLVIVLAALWLLWIG), 62–82 (WYTPSHVIHGLVFYAALWLVA), 148–168 (LPVWASVAIVIGFEALTTWLI), and 172–192 (LALNVLMLLWPLEAVRGWQAA).

Belongs to the UPF0314 family.

The protein localises to the cell membrane. In Paracoccus denitrificans (strain Pd 1222), this protein is UPF0314 protein Pden_1914.